The following is a 228-amino-acid chain: ATP-dependent dethiobiotin synthetase BioD 1 (228 aa).

Position 13–18 (13–18 (EVGKTV)) interacts with ATP. Thr17 provides a ligand contact to Mg(2+). Lys38 is an active-site residue. Ser42 serves as a coordination point for substrate. Residues Asp55, 116-119 (EGAG), 176-177 (ND), and 205-207 (PWL) contribute to the ATP site. Residues Asp55 and Glu116 each contribute to the Mg(2+) site.

This sequence belongs to the dethiobiotin synthetase family. As to quaternary structure, homodimer. Mg(2+) serves as cofactor.

The protein resides in the cytoplasm. The enzyme catalyses (7R,8S)-7,8-diammoniononanoate + CO2 + ATP = (4R,5S)-dethiobiotin + ADP + phosphate + 3 H(+). Its pathway is cofactor biosynthesis; biotin biosynthesis; biotin from 7,8-diaminononanoate: step 1/2. Functionally, catalyzes a mechanistically unusual reaction, the ATP-dependent insertion of CO2 between the N7 and N8 nitrogen atoms of 7,8-diaminopelargonic acid (DAPA, also called 7,8-diammoniononanoate) to form a ureido ring. The chain is ATP-dependent dethiobiotin synthetase BioD 1 from Salmonella typhimurium (strain LT2 / SGSC1412 / ATCC 700720).